The following is a 289-amino-acid chain: Protoheme IX farnesyltransferase 2 (289 aa).

9 helical membrane passes run 4-24 (PGII…AAKG), 28-48 (LVLM…GCAI), 66-86 (RVTV…LALG), 99-118 (ALAL…VYSL), 124-144 (SVYG…VGYC), 155-175 (AILL…IAIF), 199-219 (LHIV…PLAG), 221-241 (TGIA…AMAL), and 256-276 (QVFG…ALDF).

It belongs to the UbiA prenyltransferase family. Protoheme IX farnesyltransferase subfamily.

The protein localises to the cell inner membrane. The catalysed reaction is heme b + (2E,6E)-farnesyl diphosphate + H2O = Fe(II)-heme o + diphosphate. It participates in porphyrin-containing compound metabolism; heme O biosynthesis; heme O from protoheme: step 1/1. In terms of biological role, converts heme B (protoheme IX) to heme O by substitution of the vinyl group on carbon 2 of heme B porphyrin ring with a hydroxyethyl farnesyl side group. The polypeptide is Protoheme IX farnesyltransferase 2 (Shewanella baltica (strain OS195)).